The chain runs to 89 residues: Small ribosomal subunit protein uS14 (89 aa).

The protein belongs to the universal ribosomal protein uS14 family. In terms of assembly, part of the 30S ribosomal subunit. Contacts proteins S3 and S10.

Binds 16S rRNA, required for the assembly of 30S particles and may also be responsible for determining the conformation of the 16S rRNA at the A site. The polypeptide is Small ribosomal subunit protein uS14 (Chlorobium phaeobacteroides (strain BS1)).